We begin with the raw amino-acid sequence, 212 residues long: Protein GET1 (212 aa).

Residues Met1–Leu4 lie on the Lumenal side of the membrane. The chain crosses the membrane as a helical span at residues Leu5–Arg24. Over Thr25 to Arg110 the chain is Cytoplasmic. A coiled-coil region spans residues Ala75–Lys99. The helical transmembrane segment at Trp111–Phe131 threads the bilayer. At Asp132–Thr155 the chain is on the lumenal side. A helical transmembrane segment spans residues Val156–Val172. At Gly173 to Gln212 the chain is on the cytoplasmic side. A disordered region spans residues Pro189 to Gln212. Residues Gly201–Gln212 show a composition bias toward basic and acidic residues.

Belongs to the WRB/GET1 family. Interacts with GET3.

The protein resides in the endoplasmic reticulum membrane. Its function is as follows. Required for the post-translational delivery of tail-anchored (TA) proteins to the endoplasmic reticulum. Acts as a membrane receptor for soluble GET3, which recognizes and selectively binds the transmembrane domain of TA proteins in the cytosol. The protein is Protein GET1 of Arthroderma otae (strain ATCC MYA-4605 / CBS 113480) (Microsporum canis).